The sequence spans 624 residues: DNA mismatch repair protein MutL (624 aa).

This sequence belongs to the DNA mismatch repair MutL/HexB family.

Functionally, this protein is involved in the repair of mismatches in DNA. It is required for dam-dependent methyl-directed DNA mismatch repair. May act as a 'molecular matchmaker', a protein that promotes the formation of a stable complex between two or more DNA-binding proteins in an ATP-dependent manner without itself being part of a final effector complex. This chain is DNA mismatch repair protein MutL, found in Xanthomonas campestris pv. campestris (strain B100).